A 219-amino-acid chain; its full sequence is Flagellar transcriptional regulator FlhC (219 aa).

Zn(2+)-binding residues include Cys137, Cys140, Cys157, and Cys160.

Belongs to the FlhC family. As to quaternary structure, heterohexamer composed of two FlhC and four FlhD subunits. Each FlhC binds a FlhD dimer, forming a heterotrimer, and a hexamer assembles by dimerization of two heterotrimers. Zn(2+) is required as a cofactor.

The protein localises to the cytoplasm. Functionally, functions in complex with FlhD as a master transcriptional regulator that regulates transcription of several flagellar and non-flagellar operons by binding to their promoter region. Activates expression of class 2 flagellar genes, including fliA, which is a flagellum-specific sigma factor that turns on the class 3 genes. Also regulates genes whose products function in a variety of physiological pathways. This Paraburkholderia phymatum (strain DSM 17167 / CIP 108236 / LMG 21445 / STM815) (Burkholderia phymatum) protein is Flagellar transcriptional regulator FlhC.